The following is a 250-amino-acid chain: 5-oxoprolinase subunit A (250 aa).

Belongs to the LamB/PxpA family. As to quaternary structure, forms a complex composed of PxpA, PxpB and PxpC.

It catalyses the reaction 5-oxo-L-proline + ATP + 2 H2O = L-glutamate + ADP + phosphate + H(+). In terms of biological role, catalyzes the cleavage of 5-oxoproline to form L-glutamate coupled to the hydrolysis of ATP to ADP and inorganic phosphate. The chain is 5-oxoprolinase subunit A from Pseudomonas fluorescens (strain Pf0-1).